A 517-amino-acid chain; its full sequence is Alpha-amylase (517 aa).

Positions M1–G21 are cleaved as a signal peptide. C52 and C108 form a disulfide bridge. Ca(2+) is bound by residues N122, R178, and D187. Position 215 (R215) interacts with chloride. Catalysis depends on D217, which acts as the Nucleophile. Position 221 (H221) interacts with Ca(2+). E253 serves as the catalytic Proton donor. R355 is a chloride binding site. 2 disulfide bridges follow: C397/C403 and C470/C482.

The protein belongs to the glycosyl hydrolase 13 family. As to quaternary structure, monomer. It depends on Ca(2+) as a cofactor. The cofactor is chloride.

The protein localises to the secreted. It carries out the reaction Endohydrolysis of (1-&gt;4)-alpha-D-glucosidic linkages in polysaccharides containing three or more (1-&gt;4)-alpha-linked D-glucose units.. Activated by chloride ions. Inhibited by acarbose. Not inhibited by wheat alpha-amylase inhibitors 1 (WI-1, the tetrameric form) or 3 (WI-3, the monomeric form) and bean alpha-amylase inhibitor 1 (alphaAI-1). In Acarus siro (Flour mite), this protein is Alpha-amylase.